A 422-amino-acid chain; its full sequence is UDP-N-acetylglucosamine 1-carboxyvinyltransferase (422 aa).

A phosphoenolpyruvate-binding site is contributed by 22–23 (KN). Residue Arg92 coordinates UDP-N-acetyl-alpha-D-glucosamine. The active-site Proton donor is Cys116. Residue Cys116 is modified to 2-(S-cysteinyl)pyruvic acid O-phosphothioketal. UDP-N-acetyl-alpha-D-glucosamine is bound by residues 121 to 125 (RPVDL), Asp307, and Leu329.

This sequence belongs to the EPSP synthase family. MurA subfamily.

The protein localises to the cytoplasm. It catalyses the reaction phosphoenolpyruvate + UDP-N-acetyl-alpha-D-glucosamine = UDP-N-acetyl-3-O-(1-carboxyvinyl)-alpha-D-glucosamine + phosphate. It participates in cell wall biogenesis; peptidoglycan biosynthesis. Functionally, cell wall formation. Adds enolpyruvyl to UDP-N-acetylglucosamine. In Aliarcobacter butzleri (strain RM4018) (Arcobacter butzleri), this protein is UDP-N-acetylglucosamine 1-carboxyvinyltransferase.